The following is a 322-amino-acid chain: Ribose-phosphate pyrophosphokinase 1 (322 aa).

Residues aspartate 39–glutamate 41 and arginine 98–glutamine 99 contribute to the ATP site. Mg(2+) contacts are provided by histidine 132 and aspartate 173. The active site involves lysine 196. Residues arginine 198, aspartate 224, and aspartate 228–threonine 232 each bind D-ribose 5-phosphate.

This sequence belongs to the ribose-phosphate pyrophosphokinase family. Class I subfamily. Homohexamer. Mg(2+) is required as a cofactor.

It localises to the cytoplasm. It carries out the reaction D-ribose 5-phosphate + ATP = 5-phospho-alpha-D-ribose 1-diphosphate + AMP + H(+). It participates in metabolic intermediate biosynthesis; 5-phospho-alpha-D-ribose 1-diphosphate biosynthesis; 5-phospho-alpha-D-ribose 1-diphosphate from D-ribose 5-phosphate (route I): step 1/1. Its function is as follows. Involved in the biosynthesis of the central metabolite phospho-alpha-D-ribosyl-1-pyrophosphate (PRPP) via the transfer of pyrophosphoryl group from ATP to 1-hydroxyl of ribose-5-phosphate (Rib-5-P). The chain is Ribose-phosphate pyrophosphokinase 1 from Streptococcus mutans serotype c (strain ATCC 700610 / UA159).